The primary structure comprises 497 residues: UPF0371 protein DIP2346 (497 aa).

The protein belongs to the UPF0371 family.

The chain is UPF0371 protein DIP2346 from Corynebacterium diphtheriae (strain ATCC 700971 / NCTC 13129 / Biotype gravis).